The chain runs to 148 residues: Truncated transcription factor CAULIFLOWER D (148 aa).

The region spanning 1-61 (MGRGRVEMKR…GKLFEYSSES (61 aa)) is the MADS-box domain. The K-box; partial domain maps to 90–148 (QTNWSMEYSRLKAKIELWERNQRHYLGEDLESISIKELQNLEQQLDTSLKHIRSRKVCK).

As to quaternary structure, homodimer capable of binding to CArG-box sequences.

The protein resides in the nucleus. In terms of biological role, probable transcription factor that promotes early floral meristem identity in synergy with APETALA1, FRUITFULL and LEAFY. Is required subsequently for the transition of an inflorescence meristem into a floral meristem. Seems to be partially redundant to the function of APETALA1. This chain is Truncated transcription factor CAULIFLOWER D (CAL-D), found in Brassica oleracea var. botrytis (Cauliflower).